Reading from the N-terminus, the 257-residue chain is Cilia- and flagella-associated protein 300 (257 aa).

The protein belongs to the CFAP300 family.

The protein resides in the cytoplasm. It is found in the cytoskeleton. Its subcellular location is the flagellum axoneme. In terms of biological role, cilium- and flagellum-specific protein that plays a role in axonemal structure organization and motility. Plays a role in outer and inner dynein arm assembly. The sequence is that of Cilia- and flagella-associated protein 300 from Chlamydomonas reinhardtii (Chlamydomonas smithii).